Reading from the N-terminus, the 332-residue chain is Malate dehydrogenase, cytoplasmic (332 aa).

Residues 16–17, Asp-43, and Gly-90 each bind NAD(+); that span reads QI. Residue Arg-99 participates in oxaloacetate binding. The NAD(+) site is built by Gln-113 and Asn-132. Asn-132, Arg-163, His-188, and Ser-243 together coordinate oxaloacetate. His-188 functions as the Proton acceptor in the catalytic mechanism.

Belongs to the LDH/MDH superfamily. MDH type 2 family. As to quaternary structure, homodimer.

It localises to the cytoplasm. It catalyses the reaction (S)-malate + NAD(+) = oxaloacetate + NADH + H(+). This Beta vulgaris (Sugar beet) protein is Malate dehydrogenase, cytoplasmic (NR1).